The sequence spans 303 residues: Ornithine carbamoyltransferase (303 aa).

Carbamoyl phosphate contacts are provided by residues Ser-52–Thr-55, Gln-79, Arg-103, and His-130–Gln-133. Residues Asn-161, Asp-222, and Ser-226–Met-227 each bind L-ornithine. Residues Cys-262–Leu-263 and Lys-290 each bind carbamoyl phosphate.

Belongs to the aspartate/ornithine carbamoyltransferase superfamily. OTCase family.

Its subcellular location is the cytoplasm. The enzyme catalyses carbamoyl phosphate + L-ornithine = L-citrulline + phosphate + H(+). Its pathway is amino-acid biosynthesis; L-arginine biosynthesis; L-arginine from L-ornithine and carbamoyl phosphate: step 1/3. Functionally, reversibly catalyzes the transfer of the carbamoyl group from carbamoyl phosphate (CP) to the N(epsilon) atom of ornithine (ORN) to produce L-citrulline. This chain is Ornithine carbamoyltransferase, found in Desulfotalea psychrophila (strain LSv54 / DSM 12343).